The sequence spans 72 residues: Translation initiation factor IF-1 (72 aa).

One can recognise an S1-like domain in the interval 1–72; it reads MAKEDNIEMQ…SKGRIVFRSR (72 aa).

It belongs to the IF-1 family. Component of the 30S ribosomal translation pre-initiation complex which assembles on the 30S ribosome in the order IF-2 and IF-3, IF-1 and N-formylmethionyl-tRNA(fMet); mRNA recruitment can occur at any time during PIC assembly.

It is found in the cytoplasm. In terms of biological role, one of the essential components for the initiation of protein synthesis. Stabilizes the binding of IF-2 and IF-3 on the 30S subunit to which N-formylmethionyl-tRNA(fMet) subsequently binds. Helps modulate mRNA selection, yielding the 30S pre-initiation complex (PIC). Upon addition of the 50S ribosomal subunit IF-1, IF-2 and IF-3 are released leaving the mature 70S translation initiation complex. The sequence is that of Translation initiation factor IF-1 from Salmonella paratyphi A (strain ATCC 9150 / SARB42).